A 516-amino-acid polypeptide reads, in one-letter code: HTDFFTSIGHMTDLINTEKDLVISKLKDYIKAEESKLEQIKKWAEKLDKLTDTATKDPEGFLGHPANAFKLMKRLNTEWGELESLVLKDMSDGFISNMTIQRQFFPNDEDQTGARKALLRLQDTYNLDTDTLSRGNLPGVKHKSFLTAEDCFELGKIRYTEADYYHTELWMEQALKQLDEGEVSSADKVYILDYLSYAVYQQGDLSKAMMLTKRLLELDPEHQRANGNMKYFEYIMAKEKEANKSSTDAEDQTDKETEVKKKDYLPERRKYEMLCRGEGLKMTPRRQKRLFCRYYDGNRNPRYILGPVKQEDEWDKPRIVRFLDIISDEEIETVKELAKPRLSRATVHDPETGKLTTAHYRVSKSAWLSGYESPVVSRINTRIQDLTGLDVSTAEELQVANYGVGGQYEPHFDFGRKDEPDAFKELGTGNRIATWLFYMSDVSAGGATVFPEVGASVWPKKGTAVFWYNLFPSGEGDYSTRHAACPVLVGNKWVSNKWLHERGQEFRRPCTLSELE.

An N-linked (GlcNAc...) asparagine glycan is attached at asparagine 97. One copy of the TPR repeat lies at 189–222; sequence VYILDYLSYAVYQQGDLSKAMMLTKRLLELDPEH. Asparagine 243 carries N-linked (GlcNAc...) asparagine glycosylation. Residues 393 to 501 enclose the Fe2OG dioxygenase domain; sequence TAEELQVANY…KWVSNKWLHE (109 aa). Positions 411, 413, and 482 each coordinate Fe cation. Lysine 492 provides a ligand contact to 2-oxoglutarate.

Belongs to the P4HA family. In terms of assembly, heterotetramer of two alpha chains and two beta chains (the beta chain is the multi-functional PDI). The cofactor is Fe(2+). L-ascorbate serves as cofactor.

The protein localises to the endoplasmic reticulum lumen. The catalysed reaction is L-prolyl-[collagen] + 2-oxoglutarate + O2 = trans-4-hydroxy-L-prolyl-[collagen] + succinate + CO2. In terms of biological role, catalyzes the post-translational formation of 4-hydroxyproline in -Xaa-Pro-Gly- sequences in collagens and other proteins. This is Prolyl 4-hydroxylase subunit alpha-1 (P4HA1) from Gallus gallus (Chicken).